We begin with the raw amino-acid sequence, 552 residues long: Hyaluronan synthase 2 (552 aa).

The Cytoplasmic segment spans residues 1–11 (MHCERFLCVLR). Residues 12–32 (IIGTTLFGVSLLLGITAAYIV) traverse the membrane as a helical segment. Topologically, residues 33–45 (GYQFIQTDNYYFS) are extracellular. The helical transmembrane segment at 46-66 (FGLYGAFLASHLIIQSLFAFL) threads the bilayer. Over 67-374 (EHRKMKKSLE…NAMWFHKHHL (308 aa)) the chain is Cytoplasmic. Residue T110 is modified to Phosphothreonine. Residue K190 forms a Glycyl lysine isopeptide (Lys-Gly) (interchain with G-Cter in ubiquitin) linkage. A glycan (O-linked (GlcNAc) serine) is linked at S221. Phosphothreonine is present on T328. The chain crosses the membrane as a helical span at residues 375-395 (WMTYEAVITGFFPFFLIATVI). Residues 396–402 (QLFYRGK) are Extracellular-facing. A helical membrane pass occupies residues 403-423 (IWNILLFLLTVQLVGLIKSSF). At 424–429 (ASCLRG) the chain is on the cytoplasmic side. A helical membrane pass occupies residues 430 to 450 (NIVMVFMSLYSVLYMSSLLPA). The Extracellular portion of the chain corresponds to 451 to 475 (KMFAIATINKAGWGTSGRKTIVVNF). A helical transmembrane segment spans residues 476-496 (IGLIPVSVWFTILLGGVIFTI). Residues 497 to 510 (YKESKKPFSESKQT) lie on the Cytoplasmic side of the membrane. The helical transmembrane segment at 511-531 (VLIVGTLIYACYWVVLLTLYV) threads the bilayer. Topologically, residues 532–552 (VLINKCGRRKKGQQYDMVLDV) are extracellular.

This sequence belongs to the NodC/HAS family. As to quaternary structure, homodimer; dimerization promotes enzymatic activity. Forms heterodimer with HAS3. Forms heterodimer with HAS1. Mg(2+) is required as a cofactor. Phosphorylation at Thr-328 is essential for hyaluronan synthase activity. Post-translationally, O-GlcNAcylation at Ser-221 increases the stability of HAS2 and plasma membrane localization. In terms of processing, ubiquitination at Lys-190; this ubiquitination is essential for hyaluronan synthase activity and homo- or hetero-oligomerization. Can also be poly-ubiquitinated. Deubiquitinated by USP17L22/USP17 and USP4. USP17L22/USP17 efficiently removes 'Lys-63'- and 'Lys-48'-linked polyubiquitin chains, whereas USP4 preferentially removes monoubiquitination and, partially, both 'Lys-63'- and 'Lys-48'-linked polyubiquitin chain.

The protein localises to the cell membrane. It localises to the endoplasmic reticulum membrane. Its subcellular location is the vesicle. It is found in the golgi apparatus membrane. The protein resides in the lysosome. The enzyme catalyses [hyaluronan](n) + UDP-N-acetyl-alpha-D-glucosamine = N-acetyl-beta-D-glucosaminyl-(1-&gt;4)-[hyaluronan](n) + UDP + H(+). The catalysed reaction is N-acetyl-beta-D-glucosaminyl-(1-&gt;4)-[hyaluronan](n) + UDP-alpha-D-glucuronate = [hyaluronan](n+1) + UDP + H(+). It functions in the pathway glycan biosynthesis; hyaluronan biosynthesis. Functionally, catalyzes the addition of GlcNAc or GlcUA monosaccharides to the nascent hyaluronan polymer. Therefore, it is essential to hyaluronan synthesis a major component of most extracellular matrices that has a structural role in tissues architectures and regulates cell adhesion, migration and differentiation. This is one of three isoenzymes responsible for cellular hyaluronan synthesis and it is particularly responsible for the synthesis of high molecular mass hyaluronan. The chain is Hyaluronan synthase 2 (Has2) from Rattus norvegicus (Rat).